The primary structure comprises 58 residues: uncharacterized protein (58 aa).

A run of 2 helical transmembrane segments spans residues 7–27 (IFDI…VAKT) and 29–49 (YGTG…AYKI).

The protein localises to the cell membrane. This is an uncharacterized protein from Bacillus subtilis (strain 168).